The primary structure comprises 439 residues: Protein pop-1 (439 aa).

The disordered stretch occupies residues 1–38 (MMADEELGDEVKVFRRDEDADDDPMISGETSEQQLADD). Residues 9-18 (DEVKVFRRDE) show a composition bias toward basic and acidic residues. The segment at 87-138 (SGLPIMFPMVVPQYLSPNPNINMMNMMTMRAAMAGAPLSPAFPAMFSPNPLF) is involved in nuclear asymmetry. At S125 the chain carries Phosphoserine; by LIT1. A DNA-binding region (HMG box) is located at residues 199–269 (IKKPLNAFMW…SHKEKYPQWS (71 aa)). Over residues 254-265 (AKKDRESHKEKY) the composition is skewed to basic and acidic residues. 3 disordered regions span residues 254 to 298 (AKKD…NNDQ), 329 to 365 (RSGS…MPMN), and 385 to 439 (SAHL…VCTL). Residues 277 to 286 (NKKKPKRKRD) show a composition bias toward basic residues. Composition is skewed to low complexity over residues 346 to 365 (GCSS…MPMN) and 385 to 400 (SAHL…SGTS). Residues 409–420 (SESDVDEDEDID) are compositionally biased toward acidic residues. The segment covering 422 to 439 (TITQQTQEYIMQESVCTL) has biased composition (polar residues).

This sequence belongs to the TCF/LEF family. In terms of assembly, interacts with hda-1. Interacts with bar-1. Interacts with par-5; the interaction is direct and is enhanced by lit-1-mediated pop-1 phosphorylation. The interaction also leads to the subsequent nuclear export of pop-1. Interacts (when phosphorylated on Ser-125) with lit-1; the interaction is dependent on the beta-catenin-lit-1 complex. Interacts with wrm-1. Post-translationally, phosphorylated on Ser-125 by lit-1 in the beta-catenin-lit-1 complex. Phosphorylation promotes the interaction of pop-1 and par-5 and the subsequent translocation of pop-1 from the nucleus to the cytoplasm.

It is found in the nucleus. Its subcellular location is the cytoplasm. In terms of biological role, part of the Wnt signaling pathway essential for the specification of the mesodermal cell fate in early embryos. Required for asymmetrical division of somatic gonadal precursor descendants which initiate axis formation required to control organ shape. Similarly, involved in asymmetrical division of seam cells, a stem cell-like lineage. Represses expression of target genes via its interaction with hda-1 histone deacetylase. Required for specification of the M lineage-derived coelomocyte and sex myoblast fate. Regulates coelomocyte fate by positively regulating proliferation and ceh-34 and possibly eya-1 expression in M.dlpa and M.drpa precursors. This chain is Protein pop-1, found in Caenorhabditis briggsae.